Reading from the N-terminus, the 412-residue chain is CinA-like protein (412 aa).

The protein belongs to the CinA family.

The sequence is that of CinA-like protein from Salinibacter ruber (strain DSM 13855 / M31).